Consider the following 137-residue polypeptide: F420H(2)-dependent biliverdin reductase (137 aa).

Residues 36–41 (HVVAVG), 54–55 (IT), 60–61 (QK), Arg67, and 78–81 (GARW) contribute to the coenzyme F420-(gamma-Glu)n site.

This sequence belongs to the F420H(2)-dependent biliverdin reductase family. As to quaternary structure, homodimer.

It localises to the cell surface. Its subcellular location is the secreted. The catalysed reaction is (4Z,15Z)-bilirubin IXalpha + oxidized coenzyme F420-(gamma-L-Glu)(n) + H(+) = biliverdin IXalpha + reduced coenzyme F420-(gamma-L-Glu)(n). Functionally, catalyzes the F420H(2)-dependent reduction of biliverdin-IXalpha at C10 position, leading to bilirubin-IXalpha, a potent antioxidant. As biliverdin-IXalpha is produced in high amounts in macrophages infected with M.tuberculosis, its reduction by Rv2074 may play a role in protecting mycobacteria against oxidative stress, aiding the persistence of M.tuberculosis infection. The sequence is that of F420H(2)-dependent biliverdin reductase from Mycobacterium tuberculosis (strain CDC 1551 / Oshkosh).